The primary structure comprises 879 residues: Phosphoenolpyruvate carboxylase (879 aa).

Residues histidine 138 and lysine 546 contribute to the active site.

It belongs to the PEPCase type 1 family. Mg(2+) is required as a cofactor.

The catalysed reaction is oxaloacetate + phosphate = phosphoenolpyruvate + hydrogencarbonate. Functionally, forms oxaloacetate, a four-carbon dicarboxylic acid source for the tricarboxylic acid cycle. The protein is Phosphoenolpyruvate carboxylase of Pectobacterium carotovorum subsp. carotovorum (strain PC1).